The following is a 142-amino-acid chain: Large ribosomal subunit protein uL11 (142 aa).

The protein belongs to the universal ribosomal protein uL11 family. Part of the ribosomal stalk of the 50S ribosomal subunit. Interacts with L10 and the large rRNA to form the base of the stalk. L10 forms an elongated spine to which L12 dimers bind in a sequential fashion forming a multimeric L10(L12)X complex. In terms of processing, one or more lysine residues are methylated.

Its function is as follows. Forms part of the ribosomal stalk which helps the ribosome interact with GTP-bound translation factors. This Mycobacterium sp. (strain JLS) protein is Large ribosomal subunit protein uL11.